The following is a 116-amino-acid chain: Non-specific lipid-transfer protein (116 aa).

Positions 1–22 (MSLKLACVVVLCMVVGAPLAQG) are cleaved as a signal peptide. 3 disulfide bridges follow: Cys36-Cys52, Cys53-Cys98, and Cys73-Cys112.

This sequence belongs to the plant LTP family.

Its function is as follows. Plant non-specific lipid-transfer proteins transfer phospholipids as well as galactolipids across membranes. May play a role in wax or cutin deposition in the cell walls of expanding epidermal cells and certain secretory tissues. The chain is Non-specific lipid-transfer protein from Gossypium hirsutum (Upland cotton).